Reading from the N-terminus, the 605-residue chain is Elongation factor 4 (605 aa).

The region spanning 4 to 181 is the tr-type G domain; sequence NKIKTFSIIA…AIVEYVPSPL (178 aa). GTP is bound by residues 16 to 21 and 128 to 131; these read DHGKST and NKVD.

The protein belongs to the TRAFAC class translation factor GTPase superfamily. Classic translation factor GTPase family. LepA subfamily.

It is found in the cell membrane. It carries out the reaction GTP + H2O = GDP + phosphate + H(+). Required for accurate and efficient protein synthesis under certain stress conditions. May act as a fidelity factor of the translation reaction, by catalyzing a one-codon backward translocation of tRNAs on improperly translocated ribosomes. Back-translocation proceeds from a post-translocation (POST) complex to a pre-translocation (PRE) complex, thus giving elongation factor G a second chance to translocate the tRNAs correctly. Binds to ribosomes in a GTP-dependent manner. In Mycoplasmopsis synoviae (strain 53) (Mycoplasma synoviae), this protein is Elongation factor 4.